A 162-amino-acid polypeptide reads, in one-letter code: uncharacterized protein (162 aa).

Belongs to the baculoviridae 19 kDa protein family.

This is an uncharacterized protein from Tortricidae (ClGV).